A 51-amino-acid polypeptide reads, in one-letter code: Large ribosomal subunit protein bL33 (51 aa).

The protein belongs to the bacterial ribosomal protein bL33 family.

The chain is Large ribosomal subunit protein bL33 from Acinetobacter baylyi (strain ATCC 33305 / BD413 / ADP1).